The chain runs to 617 residues: Chaperone protein HscA homolog (617 aa).

This sequence belongs to the heat shock protein 70 family.

Chaperone involved in the maturation of iron-sulfur cluster-containing proteins. Has a low intrinsic ATPase activity which is markedly stimulated by HscB. This is Chaperone protein HscA homolog from Actinobacillus pleuropneumoniae serotype 5b (strain L20).